A 25-amino-acid chain; its full sequence is Histone H1.1 (25 aa).

The H15 domain occupies Met-1 to Glu-25. Residues Met-1–Glu-25 are disordered. The span at Leu-9–Glu-25 shows a compositional bias: basic and acidic residues.

It is found in the nucleus. The protein localises to the chromosome. Histones H1 are necessary for the condensation of nucleosome chains into higher-order structures. In Triticum aestivum (Wheat), this protein is Histone H1.1.